A 971-amino-acid chain; its full sequence is Outer capsid protein VP2 (971 aa).

Belongs to the orbivirus VP2 family.

It is found in the virion. Functionally, the VP2 protein is one of the two proteins (with VP5) which constitute the virus particle outer capsid. It is the major target of the host immunogenic response. The chain is Outer capsid protein VP2 (Segment-2) from Epizootic hemorrhagic disease virus 1 (EHDV-1).